The following is a 158-amino-acid chain: 2-C-methyl-D-erythritol 2,4-cyclodiphosphate synthase (158 aa).

Positions 9 and 11 each coordinate a divalent metal cation. Residues 9-11 (DVH) and 35-36 (HS) contribute to the 4-CDP-2-C-methyl-D-erythritol 2-phosphate site. Residue histidine 43 participates in a divalent metal cation binding. Residues 57-59 (DIG), 62-66 (FPDTD), 101-107 (AQRPKMA), 133-136 (TTTE), phenylalanine 140, and arginine 143 contribute to the 4-CDP-2-C-methyl-D-erythritol 2-phosphate site.

It belongs to the IspF family. As to quaternary structure, homotrimer. Requires a divalent metal cation as cofactor.

It catalyses the reaction 4-CDP-2-C-methyl-D-erythritol 2-phosphate = 2-C-methyl-D-erythritol 2,4-cyclic diphosphate + CMP. It functions in the pathway isoprenoid biosynthesis; isopentenyl diphosphate biosynthesis via DXP pathway; isopentenyl diphosphate from 1-deoxy-D-xylulose 5-phosphate: step 4/6. Functionally, involved in the biosynthesis of isopentenyl diphosphate (IPP) and dimethylallyl diphosphate (DMAPP), two major building blocks of isoprenoid compounds. Catalyzes the conversion of 4-diphosphocytidyl-2-C-methyl-D-erythritol 2-phosphate (CDP-ME2P) to 2-C-methyl-D-erythritol 2,4-cyclodiphosphate (ME-CPP) with a corresponding release of cytidine 5-monophosphate (CMP). This is 2-C-methyl-D-erythritol 2,4-cyclodiphosphate synthase from Lysinibacillus sphaericus (strain C3-41).